Consider the following 83-residue polypeptide: Mitochondrial import inner membrane translocase subunit Tim8 (83 aa).

The Twin CX3C motif motif lies at 35-60 (CWDVCFADYRPPSKMDGKTQTCIQNC). 2 cysteine pairs are disulfide-bonded: cysteine 35-cysteine 60 and cysteine 39-cysteine 56.

This sequence belongs to the small Tim family. Heterohexamer; composed of 3 copies of ddp-1/tim-8 and 3 copies of tin-13/tim-13, named soluble 70 kDa complex. Associates with the TIM22 complex, whose core is composed of tim-22.

The protein localises to the mitochondrion inner membrane. In terms of biological role, mitochondrial intermembrane chaperone that participates in the import and insertion of some multi-pass transmembrane proteins into the mitochondrial inner membrane. Also required for the transfer of beta-barrel precursors from the TOM complex to the sorting and assembly machinery (SAM complex) of the outer membrane. Acts as a chaperone-like protein that protects the hydrophobic precursors from aggregation and guide them through the mitochondrial intermembrane space. The ddp-1/tim-8-tim-13 complex mediates the import of some proteins while the predominant tim-9/tin-9.1-tim-10/tin-10 70 kDa complex mediates the import of much more proteins. This Caenorhabditis elegans protein is Mitochondrial import inner membrane translocase subunit Tim8.